We begin with the raw amino-acid sequence, 414 residues long: Serine hydroxymethyltransferase (414 aa).

(6S)-5,6,7,8-tetrahydrofolate contacts are provided by residues L121 and 125 to 127 (GHL). N6-(pyridoxal phosphate)lysine is present on K230.

Belongs to the SHMT family. As to quaternary structure, homodimer. Pyridoxal 5'-phosphate serves as cofactor.

It is found in the cytoplasm. The catalysed reaction is (6R)-5,10-methylene-5,6,7,8-tetrahydrofolate + glycine + H2O = (6S)-5,6,7,8-tetrahydrofolate + L-serine. It participates in one-carbon metabolism; tetrahydrofolate interconversion. It functions in the pathway amino-acid biosynthesis; glycine biosynthesis; glycine from L-serine: step 1/1. Its function is as follows. Catalyzes the reversible interconversion of serine and glycine with tetrahydrofolate (THF) serving as the one-carbon carrier. This reaction serves as the major source of one-carbon groups required for the biosynthesis of purines, thymidylate, methionine, and other important biomolecules. Also exhibits THF-independent aldolase activity toward beta-hydroxyamino acids, producing glycine and aldehydes, via a retro-aldol mechanism. The sequence is that of Serine hydroxymethyltransferase from Acidithiobacillus ferrooxidans (strain ATCC 23270 / DSM 14882 / CIP 104768 / NCIMB 8455) (Ferrobacillus ferrooxidans (strain ATCC 23270)).